Consider the following 459-residue polypeptide: Cysteine--tRNA ligase (459 aa).

Cysteine 31 contributes to the Zn(2+) binding site. The short motif at 33–43 (PTVYYNPHIGN) is the 'HIGH' region element. Cysteine 216, histidine 241, and glutamate 245 together coordinate Zn(2+). The 'KMSKS' region motif lies at 274–278 (KMSKS). Lysine 277 contributes to the ATP binding site.

The protein belongs to the class-I aminoacyl-tRNA synthetase family. In terms of assembly, monomer. The cofactor is Zn(2+).

Its subcellular location is the cytoplasm. It carries out the reaction tRNA(Cys) + L-cysteine + ATP = L-cysteinyl-tRNA(Cys) + AMP + diphosphate. The chain is Cysteine--tRNA ligase from Rickettsia rickettsii (strain Iowa).